We begin with the raw amino-acid sequence, 134 residues long: Aspartate 1-decarboxylase (134 aa).

Ser25 acts as the Schiff-base intermediate with substrate; via pyruvic acid in catalysis. Ser25 is subject to Pyruvic acid (Ser). Thr57 lines the substrate pocket. Tyr58 acts as the Proton donor in catalysis. 73 to 75 contacts substrate; it reads GAA.

It belongs to the PanD family. Heterooctamer of four alpha and four beta subunits. It depends on pyruvate as a cofactor. Post-translationally, is synthesized initially as an inactive proenzyme, which is activated by self-cleavage at a specific serine bond to produce a beta-subunit with a hydroxyl group at its C-terminus and an alpha-subunit with a pyruvoyl group at its N-terminus.

It is found in the cytoplasm. It catalyses the reaction L-aspartate + H(+) = beta-alanine + CO2. Its pathway is cofactor biosynthesis; (R)-pantothenate biosynthesis; beta-alanine from L-aspartate: step 1/1. In terms of biological role, catalyzes the pyruvoyl-dependent decarboxylation of aspartate to produce beta-alanine. In Geobacter sp. (strain M21), this protein is Aspartate 1-decarboxylase.